Reading from the N-terminus, the 999-residue chain is Probable K(+)/H(+) antiporter subunit A/B (999 aa).

The disordered stretch occupies residues 1 to 20; it reads MTRPASVLAGPKSRPPIHSQ. The next 24 membrane-spanning stretches (helical) occupy residues 31-48, 63-85, 106-128, 138-160, 162-181, 191-213, 233-255, 270-292, 299-321, 336-358, 389-411, 442-464, 488-510, 530-552, 604-621, 636-653, 660-682, 686-708, 729-751, 788-807, 846-868, 878-900, 913-935, and 955-977; these read LLSV…IAIF, AIAL…GGVL, FAWL…ARYY, FFAL…NLIL, AVFW…YWHH, MALT…IGKI, PLYG…QFPF, SAYL…FWPV, WFWI…AIFQ, LGLI…VFHI, GLFH…MAGV, YVAT…GVFF, FLVL…FLHT, GWNI…YFLM, RLLV…LLLG, AFAL…GSAY, LASL…WLSA, AVTQ…RWLP, LRDL…TVMT, TLGE…ALLL, FIPA…FLFL, FAAG…TRWV, SIGL…PFLT, and ILFD…IALA.

The protein in the N-terminal section; belongs to the CPA3 antiporters (TC 2.A.63) subunit A family. This sequence in the C-terminal section; belongs to the CPA3 antiporters (TC 2.A.63) subunit B family. In terms of assembly, may form a heterooligomeric complex that consists of six subunits: PhaAB, PhaC, PhaD, PhaE, PhaF and PhaG.

It localises to the cell membrane. Functionally, part of a K(+) efflux system which is required for the adaptation of R.meliloti to alkaline pH as well as for the infection process during symbiotic nodule development. This Rhizobium meliloti (strain 1021) (Ensifer meliloti) protein is Probable K(+)/H(+) antiporter subunit A/B (phaAB).